The primary structure comprises 274 residues: Large ribosomal subunit protein uL2 (274 aa).

A disordered region spans residues 224–274 (VAMNPVDHPHGGGEGRTSGGRHPVTPWGIPTKGYKTRRNKRSNKLIVQKRK). Residues 257–274 (YKTRRNKRSNKLIVQKRK) are compositionally biased toward basic residues.

Belongs to the universal ribosomal protein uL2 family. As to quaternary structure, part of the 50S ribosomal subunit. Forms a bridge to the 30S subunit in the 70S ribosome.

One of the primary rRNA binding proteins. Required for association of the 30S and 50S subunits to form the 70S ribosome, for tRNA binding and peptide bond formation. It has been suggested to have peptidyltransferase activity; this is somewhat controversial. Makes several contacts with the 16S rRNA in the 70S ribosome. The protein is Large ribosomal subunit protein uL2 of Francisella tularensis subsp. tularensis (strain FSC 198).